A 65-amino-acid polypeptide reads, in one-letter code: Conotoxin TsMRCL-05 (65 aa).

An N-terminal signal peptide occupies residues 1-22 (MHCLPVLVILLLLIASTPSVDA). The propeptide occupies 23 to 52 (RPNPKDDVPLASFHGAVNAKRYLRTLWNSR). Ile-64 carries the post-translational modification Isoleucine amide.

This sequence belongs to the conotoxin T superfamily. Contains 2 disulfide bonds that can be either 'C1-C3, C2-C4' or 'C1-C4, C2-C3', since these disulfide connectivities have been observed for conotoxins with cysteine framework V (for examples, see AC P0DQQ7 and AC P81755). Expressed by the venom duct.

Its subcellular location is the secreted. The sequence is that of Conotoxin TsMRCL-05 from Conus tessulatus (Tessellate cone).